The chain runs to 85 residues: Small ribosomal subunit protein uS17 (85 aa).

This sequence belongs to the universal ribosomal protein uS17 family. As to quaternary structure, part of the 30S ribosomal subunit.

Its function is as follows. One of the primary rRNA binding proteins, it binds specifically to the 5'-end of 16S ribosomal RNA. This is Small ribosomal subunit protein uS17 from Acetivibrio thermocellus (strain ATCC 27405 / DSM 1237 / JCM 9322 / NBRC 103400 / NCIMB 10682 / NRRL B-4536 / VPI 7372) (Clostridium thermocellum).